The primary structure comprises 150 residues: Large ribosomal subunit protein uL22c (150 aa).

This sequence belongs to the universal ribosomal protein uL22 family. In terms of assembly, part of the 50S ribosomal subunit.

It is found in the plastid. In terms of biological role, this protein binds specifically to 23S rRNA. Functionally, the globular domain of the protein is located near the polypeptide exit tunnel on the outside of the subunit, while an extended beta-hairpin is found that lines the wall of the exit tunnel in the center of the 70S ribosome. This Orobanche minor (Small broomrape) protein is Large ribosomal subunit protein uL22c (rpl22).